The chain runs to 470 residues: UDP-glycosyltransferase 72D1 (470 aa).

UDP-alpha-D-glucose is bound by residues S276, 343 to 345 (APQ), 360 to 368 (HCGWSSALE), and 382 to 385 (YAEQ).

It belongs to the UDP-glycosyltransferase family.

This chain is UDP-glycosyltransferase 72D1 (UGT72D1), found in Arabidopsis thaliana (Mouse-ear cress).